Here is a 170-residue protein sequence, read N- to C-terminus: Peptide deformylase (170 aa).

Fe cation contacts are provided by Cys-91 and His-133. Glu-134 is a catalytic residue. His-137 is a Fe cation binding site.

It belongs to the polypeptide deformylase family. Requires Fe(2+) as cofactor.

It carries out the reaction N-terminal N-formyl-L-methionyl-[peptide] + H2O = N-terminal L-methionyl-[peptide] + formate. Functionally, removes the formyl group from the N-terminal Met of newly synthesized proteins. Requires at least a dipeptide for an efficient rate of reaction. N-terminal L-methionine is a prerequisite for activity but the enzyme has broad specificity at other positions. The sequence is that of Peptide deformylase from Pectobacterium carotovorum subsp. carotovorum (strain PC1).